A 202-amino-acid chain; its full sequence is Orotate phosphoribosyltransferase (202 aa).

Residues Lys-93 and 113-121 (EDIITTGGS) each bind 5-phospho-alpha-D-ribose 1-diphosphate. Residues Thr-117 and Arg-145 each coordinate orotate.

It belongs to the purine/pyrimidine phosphoribosyltransferase family. PyrE subfamily. Homodimer. It depends on Mg(2+) as a cofactor.

The catalysed reaction is orotidine 5'-phosphate + diphosphate = orotate + 5-phospho-alpha-D-ribose 1-diphosphate. Its pathway is pyrimidine metabolism; UMP biosynthesis via de novo pathway; UMP from orotate: step 1/2. In terms of biological role, catalyzes the transfer of a ribosyl phosphate group from 5-phosphoribose 1-diphosphate to orotate, leading to the formation of orotidine monophosphate (OMP). In Campylobacter fetus subsp. fetus (strain 82-40), this protein is Orotate phosphoribosyltransferase.